The sequence spans 279 residues: 2-dehydro-3-deoxyphosphooctonate aldolase (279 aa).

Belongs to the KdsA family.

The protein resides in the cytoplasm. It catalyses the reaction D-arabinose 5-phosphate + phosphoenolpyruvate + H2O = 3-deoxy-alpha-D-manno-2-octulosonate-8-phosphate + phosphate. It functions in the pathway carbohydrate biosynthesis; 3-deoxy-D-manno-octulosonate biosynthesis; 3-deoxy-D-manno-octulosonate from D-ribulose 5-phosphate: step 2/3. It participates in bacterial outer membrane biogenesis; lipopolysaccharide biosynthesis. The sequence is that of 2-dehydro-3-deoxyphosphooctonate aldolase from Aromatoleum aromaticum (strain DSM 19018 / LMG 30748 / EbN1) (Azoarcus sp. (strain EbN1)).